The sequence spans 1501 residues: Multidrug resistance protein CDR1 (1501 aa).

The tract at residues 1–30 is disordered; that stretch reads MSDSKMSSQDESKLEKAISQDSSSENHSIN. Over 1 to 513 the chain is Cytoplasmic; the sequence is MSDSKMSSQD…NFLRMKGDPS (513 aa). The segment covering 8-18 has biased composition (basic and acidic residues); the sequence is SQDESKLEKAI. Positions 150 to 404 constitute an ABC transporter 1 domain; it reads LATEGFRHFQ…FEKMGWKCPQ (255 aa). Residues 514–534 traverse the membrane as a helical segment; sequence IPIFSVFGQLVMGLILSSVFY. N-linked (GlcNAc...) asparagine glycosylation is present at Asn535. Transmembrane regions (helical) follow at residues 549–569, 598–618, 623–643, and 655–675; these read AMFF…MSLF, LPVK…MVNF, GRFF…SHLF, and GAMT…GFVI. Asn724 carries N-linked (GlcNAc...) asparagine glycosylation. Residues 765–785 traverse the membrane as a helical segment; sequence LGITIGFAVFFLAIYIALTEF. Over 786–1195 the chain is Cytoplasmic; the sequence is NKGAMQKGEI…TIVQDWRSPG (410 aa). Residues 859 to 1103 form the ABC transporter 2 domain; it reads FFWRDLTYQV…MINYFEKYGA (245 aa). Residue 895–902 participates in ATP binding; the sequence is GASGAGKT. 6 helical membrane passes run 1196-1216, 1230-1250, 1281-1301, 1315-1335, 1356-1376, and 1467-1487; these read YIYS…FSFF, FSVF…LPYF, IPYQ…PLGL, GVLM…MGQL, MCLN…FWIF, and FGIF…FYWL.

This sequence belongs to the ABC transporter superfamily. ABCG family. PDR (TC 3.A.1.205) subfamily.

The protein localises to the membrane. In terms of biological role, transporter, whose physiological function is not yet established. Confers resistance to the chemical cycloheximide. This is Multidrug resistance protein CDR1 (CDR1) from Candida albicans (Yeast).